The chain runs to 259 residues: Global transcriptional regulator CodY (259 aa).

The GAF domain stretch occupies residues 1–155; sequence MNLLEKTRKI…GATVVGMEIL (155 aa). A DNA-binding region (H-T-H motif) is located at residues 203-222; that stretch reads ASKIADRVGITRSVIVNALR. Serine 215 carries the phosphoserine modification.

This sequence belongs to the CodY family.

Its subcellular location is the cytoplasm. In terms of biological role, DNA-binding global transcriptional regulator which is involved in the adaptive response to starvation and acts by directly or indirectly controlling the expression of numerous genes in response to nutrient availability. During rapid exponential growth, CodY is highly active and represses genes whose products allow adaptation to nutrient depletion. This is Global transcriptional regulator CodY from Geobacillus kaustophilus (strain HTA426).